The primary structure comprises 224 residues: Large ribosomal subunit protein bL25 (224 aa).

A disordered region spans residues 196–224 (VEEVDTDAEEVDAADVPATEQGSEEDKGE). The segment covering 197-208 (EEVDTDAEEVDA) has biased composition (acidic residues).

It belongs to the bacterial ribosomal protein bL25 family. CTC subfamily. Part of the 50S ribosomal subunit; part of the 5S rRNA/L5/L18/L25 subcomplex. Contacts the 5S rRNA. Binds to the 5S rRNA independently of L5 and L18.

In terms of biological role, this is one of the proteins that binds to the 5S RNA in the ribosome where it forms part of the central protuberance. The sequence is that of Large ribosomal subunit protein bL25 from Psychrobacter sp. (strain PRwf-1).